We begin with the raw amino-acid sequence, 722 residues long: Bifunctional UDP-N-acetylglucosamine 2-epimerase/N-acetylmannosamine kinase (722 aa).

5 residues coordinate UDP: arginine 19, serine 23, arginine 113, histidine 220, and asparagine 253. Positions 259, 271, 280, and 281 each coordinate CMP-N-acetyl-beta-neuraminate. Valine 282, serine 301, serine 302, glutamate 307, and arginine 321 together coordinate UDP. Residues 406-722 (TLSALAVDLG…VLDYTTRRIY (317 aa)) are N-acetylmannosamine kinase. Aspartate 413 contributes to the Mg(2+) binding site. Glycine 416 contacts an N-acyl-D-mannosamine 6-phosphate. Residues threonine 417, asparagine 418, and arginine 420 each coordinate ADP. Glycine 476, arginine 477, threonine 489, asparagine 516, aspartate 517, and glycine 545 together coordinate an N-acyl-D-mannosamine 6-phosphate. An N-acyl-D-mannosamine is bound by residues glycine 476, arginine 477, threonine 489, asparagine 516, and aspartate 517. Residue aspartate 517 is part of the active site. Glutamate 566 and histidine 569 together coordinate an N-acyl-D-mannosamine. An an N-acyl-D-mannosamine 6-phosphate-binding site is contributed by histidine 569. Zn(2+) is bound by residues histidine 569, cysteine 579, cysteine 581, and cysteine 586. Glutamate 588 serves as a coordination point for an N-acyl-D-mannosamine 6-phosphate. An N-acyl-D-mannosamine is bound at residue glutamate 588.

This sequence in the N-terminal section; belongs to the UDP-N-acetylglucosamine 2-epimerase family. It in the C-terminal section; belongs to the ROK (NagC/XylR) family. In terms of assembly, homodimer. Homotetramer. Homohexamer. The hexameric form exhibits both enzyme activities, whereas the dimeric form only catalyzes the phosphorylation of N-acyl-D-mannosamine. Phosphorylated. Phosphorylation by PKC activates the UDP-N-acetylglucosamine 2-epimerase activity. In terms of tissue distribution, highest expression in liver and placenta. Also found in heart, brain, lung, kidney, skeletal muscle and pancreas. Isoform 1 is expressed in heart, brain, kidney, liver, placenta, lung, spleen, pancreas, skeletal muscle and colon. Isoform 2 is expressed mainly in placenta, but also in brain, kidney, liver, lung, pancreas and colon. Isoform 3 is expressed at low level in kidney, liver, placenta and colon.

The protein resides in the cytoplasm. It is found in the cytosol. It carries out the reaction UDP-N-acetyl-alpha-D-glucosamine + H2O = aldehydo-N-acetyl-D-mannosamine + UDP + H(+). It catalyses the reaction an N-acyl-D-mannosamine + ATP = an N-acyl-D-mannosamine 6-phosphate + ADP + H(+). Its pathway is amino-sugar metabolism; N-acetylneuraminate biosynthesis. Its activity is regulated as follows. The UDP-N-acetylglucosamine 2-epimerase activity, in contrast to the N-acetylmannosamine kinase activity, exhibits allosteric regulation by cytidine monophosphate-N-acetylneuraminic acid (CMP-Neu5Ac), the end product of neuraminic acid biosynthesis. Moreover, the activity is contingent upon the oligomeric state of the enzyme. The monomeric form is inactive, while the dimeric form selectively catalyzes the phosphorylation of N-acetylmannosamine. The hexameric form, on the other hand, demonstrates full proficiency in both enzyme activities. Furthermore, the UDP-N-acetylglucosamine 2-epimerase activity is increased by PKC-mediated phosphorylation. Its function is as follows. Bifunctional enzyme that possesses both UDP-N-acetylglucosamine 2-epimerase and N-acetylmannosamine kinase activities, and serves as the initiator of the biosynthetic pathway leading to the production of N-acetylneuraminic acid (NeuAc), a critical precursor in the synthesis of sialic acids. By catalyzing this pivotal and rate-limiting step in sialic acid biosynthesis, this enzyme assumes a pivotal role in governing the regulation of cell surface sialylation, playing a role in embryonic angiogenesis. Sialic acids represent a category of negatively charged sugars that reside on the surface of cells as terminal components of glycoconjugates and mediate important functions in various cellular processes, including cell adhesion, signal transduction, and cellular recognition. The sequence is that of Bifunctional UDP-N-acetylglucosamine 2-epimerase/N-acetylmannosamine kinase from Homo sapiens (Human).